The sequence spans 345 residues: Phosphoribosylformylglycinamidine cyclo-ligase (345 aa).

This sequence belongs to the AIR synthase family.

Its subcellular location is the cytoplasm. It catalyses the reaction 2-formamido-N(1)-(5-O-phospho-beta-D-ribosyl)acetamidine + ATP = 5-amino-1-(5-phospho-beta-D-ribosyl)imidazole + ADP + phosphate + H(+). Its pathway is purine metabolism; IMP biosynthesis via de novo pathway; 5-amino-1-(5-phospho-D-ribosyl)imidazole from N(2)-formyl-N(1)-(5-phospho-D-ribosyl)glycinamide: step 2/2. The sequence is that of Phosphoribosylformylglycinamidine cyclo-ligase from Aeromonas hydrophila subsp. hydrophila (strain ATCC 7966 / DSM 30187 / BCRC 13018 / CCUG 14551 / JCM 1027 / KCTC 2358 / NCIMB 9240 / NCTC 8049).